The sequence spans 415 residues: BTB/POZ and MATH domain-containing protein 6 (415 aa).

Residues 1-33 are disordered; the sequence is MSKLMTRTSGSSSPNTIPDQIESPTSSRSVTQT. The 135-residue stretch at 35 to 169 folds into the MATH domain; sequence NGSHQFVIQG…DDCLKINCTV (135 aa). The BTB domain occupies 205–271; that stretch reads SDVTFDVAGE…MYKDSLPGDV (67 aa). Residues 385-415 form a disordered region; sequence SSSGGGKSQSVWAQLSNGGETSSRRVRQRTT. Residues 392–405 show a composition bias toward polar residues; that stretch reads SQSVWAQLSNGGET.

Belongs to the Tdpoz family. As to quaternary structure, heterodimer with BPM1. Interacts with RAP2-4. Interacts with CUL3A. Binds to MYB56 at the promoter of FLOWERING LOCUS T (FT). As to expression, ubiquitous.

The protein localises to the nucleus. Its subcellular location is the cytoplasm. It participates in protein modification; protein ubiquitination. In terms of biological role, may act as a substrate-specific adapter of an E3 ubiquitin-protein ligase complex (CUL3-RBX1-BTB) which mediates the ubiquitination and subsequent proteasomal degradation of target proteins. This chain is BTB/POZ and MATH domain-containing protein 6 (BPM6), found in Arabidopsis thaliana (Mouse-ear cress).